Reading from the N-terminus, the 272-residue chain is uncharacterized protein (272 aa).

Glutamate 163 is an active-site residue.

The protein belongs to the glycosyl hydrolase 25 family.

This is an uncharacterized protein from Escherichia coli O157:H7.